The chain runs to 356 residues: MKPVFCGNFEYDARESDLERLFRKYGKVERVDMKAGFAFVYMEDERDAEDAIRALDRFEYGRTGRRLRVEWTKNDRGGAGRSGGSRRSSSGLRPSKTLFVINFDAQNTRTRDLERHFEPYGKIVNVRIRRNFAFIQYEAQEDATRALDATNSSKLMDKVISVEYAVKDDDSRGNGYSPERRRDRSPDRRRRSPSPYRRERGSPDYGRGASPVAHKRERTSPDYGRGRRSPSPYKRARLSPDYKRDDRRRERVASPENGAVRNRSPRKGRGESRSPPPYEKRRESRSPPPYEKRRESRSPPPYEKRRERSRSRSKSSPENGQVESPGQIMEVEAGRGYDGADSPIRESPSRSPPAEE.

RRM domains follow at residues 2–74 (KPVF…WTKN) and 96–167 (KTLF…YAVK). Residues 73–92 (KNDRGGAGRSGGSRRSSSGL) are disordered. The span at 168–186 (DDDSRGNGYSPERRRDRSP) shows a compositional bias: basic and acidic residues. Positions 168–356 (DDDSRGNGYS…SPSRSPPAEE (189 aa)) are disordered. A phosphoserine mark is found at Ser-192, Ser-194, Ser-210, Ser-239, Ser-254, and Ser-274. A compositionally biased stretch (basic and acidic residues) spans 238–253 (LSPDYKRDDRRRERVA). 3 tandem repeats follow at residues 267-278 (KGRGESRSPPPY), 279-290 (EKRRESRSPPPY), and 291-302 (EKRRESRSPPPY). The tract at residues 267-307 (KGRGESRSPPPYEKRRESRSPPPYEKRRESRSPPPYEKRRE) is 4 X 12 AA tandem repeats of [KE]-[GK]-R -[GR]-E-S-R-S-P-P-P-Y. Over residues 268–306 (GRGESRSPPPYEKRRESRSPPPYEKRRESRSPPPYEKRR) the composition is skewed to basic and acidic residues. A 4; truncated repeat occupies 303–307 (EKRRE). Residues Ser-309, Ser-324, Ser-342, Ser-347, and Ser-351 each carry the phosphoserine modification.

It belongs to the splicing factor SR family. RS subfamily. Component of the spliceosome. Interacts with RCF3 and CPL1. Interacts with DRB1/HYL1 and SE. In terms of tissue distribution, leaves, stem, roots and flowers.

It is found in the nucleus. The protein resides in the nucleus speckle. Functionally, required for constitutive and alternative pre-mRNA splicing. Involved in primary miRNA processing and pri-miRNA biogenesis. Binds both intronless and intron-containing pri-miRNAs. The chain is Serine/arginine-rich splicing factor RS41 (RS41) from Arabidopsis thaliana (Mouse-ear cress).